The following is a 179-amino-acid chain: Ubiquitin-conjugating enzyme E2 2 (179 aa).

The segment at 1-28 is disordered; the sequence is MSTPARRRLMRDFKRMQQDPPSGVSASP. One can recognise a UBC core domain in the interval 4-150; sequence PARRRLMRDF…VRETVENSWN (147 aa). Catalysis depends on cysteine 88, which acts as the Glycyl thioester intermediate. The disordered stretch occupies residues 145-179; sequence VENSWNDDDDEEEEEEDEDEAEDEDDDDDDNIDED. Residues 149–179 are compositionally biased toward acidic residues; sequence WNDDDDEEEEEEDEDEAEDEDDDDDDNIDED. Residues 151-179 are acidic tail; it reads DDDDEEEEEEDEDEAEDEDDDDDDNIDED.

The protein belongs to the ubiquitin-conjugating enzyme family.

It is found in the cytoplasm. The protein localises to the nucleus. It catalyses the reaction S-ubiquitinyl-[E1 ubiquitin-activating enzyme]-L-cysteine + [E2 ubiquitin-conjugating enzyme]-L-cysteine = [E1 ubiquitin-activating enzyme]-L-cysteine + S-ubiquitinyl-[E2 ubiquitin-conjugating enzyme]-L-cysteine.. Its pathway is protein modification; protein ubiquitination. In terms of biological role, catalyzes the covalent attachment of ubiquitin to other proteins. Plays a role in transcription regulation by catalyzing the monoubiquitination of histone H2B to form H2BK123ub1. H2BK123ub1 gives a specific tag for epigenetic transcriptional activation and is also a prerequisite for H3K4me and H3K79me formation. Also involved in postreplication repair of UV-damaged DNA, in N-end rule-dependent protein degradation and in sporulation. This Candida albicans (strain SC5314 / ATCC MYA-2876) (Yeast) protein is Ubiquitin-conjugating enzyme E2 2 (UBC2).